The primary structure comprises 795 residues: Phenylalanine--tRNA ligase beta subunit (795 aa).

One can recognise a tRNA-binding domain in the interval 39 to 148; the sequence is AGTFNGVKVG…IDAPIGMDFR (110 aa). Residues 401 to 476 enclose the B5 domain; the sequence is PKPNKVALRR…RIYGYDNIPN (76 aa). Positions 454, 460, 463, and 464 each coordinate Mg(2+). The FDX-ACB domain occupies 701-794; sequence SKFPANRRDI…VSEKFGASLR (94 aa).

Belongs to the phenylalanyl-tRNA synthetase beta subunit family. Type 1 subfamily. As to quaternary structure, tetramer of two alpha and two beta subunits. Mg(2+) is required as a cofactor.

The protein resides in the cytoplasm. It catalyses the reaction tRNA(Phe) + L-phenylalanine + ATP = L-phenylalanyl-tRNA(Phe) + AMP + diphosphate + H(+). This chain is Phenylalanine--tRNA ligase beta subunit, found in Vibrio vulnificus (strain YJ016).